The sequence spans 2021 residues: HEAT repeat-containing protein 5A (2021 aa).

HEAT repeat units lie at residues 795-836 (SQRP…HLAS) and 1059-1096 (VNLS…REAA). 2 disordered regions span residues 1503-1528 (EGNG…LPAD) and 1989-2012 (RGNQ…HGSP). The segment covering 1512–1522 (VTPTSMGQERG) has biased composition (polar residues).

The protein belongs to the HEATR5 family.

The polypeptide is HEAT repeat-containing protein 5A (heatr5a) (Xenopus tropicalis (Western clawed frog)).